Reading from the N-terminus, the 676-residue chain is DNA ligase (676 aa).

NAD(+)-binding positions include 34–38, 83–84, and Glu117; these read DQEFD and SL. The active-site N6-AMP-lysine intermediate is the Lys119. 4 residues coordinate NAD(+): Arg140, Glu177, Lys285, and Lys309. 4 residues coordinate Zn(2+): Cys403, Cys406, Cys427, and Cys434. One can recognise a BRCT domain in the interval 595–676; the sequence is NNNGLLKNKT…EWLKMLNKSG (82 aa).

This sequence belongs to the NAD-dependent DNA ligase family. LigA subfamily. Mg(2+) serves as cofactor. Requires Mn(2+) as cofactor.

It carries out the reaction NAD(+) + (deoxyribonucleotide)n-3'-hydroxyl + 5'-phospho-(deoxyribonucleotide)m = (deoxyribonucleotide)n+m + AMP + beta-nicotinamide D-nucleotide.. In terms of biological role, DNA ligase that catalyzes the formation of phosphodiester linkages between 5'-phosphoryl and 3'-hydroxyl groups in double-stranded DNA using NAD as a coenzyme and as the energy source for the reaction. It is essential for DNA replication and repair of damaged DNA. The protein is DNA ligase of Pelagibacter ubique (strain HTCC1062).